We begin with the raw amino-acid sequence, 437 residues long: Chromosomal replication initiator protein DnaA (437 aa).

Residues Met1 to Lys82 form a domain I, interacts with DnaA modulators region. Residues Lys82–Ser101 are domain II. The domain III, AAA+ region stretch occupies residues Glu102–Ser318. ATP contacts are provided by Gly146, Gly148, Lys149, and Thr150. The segment at Ile319–Ala437 is domain IV, binds dsDNA.

Belongs to the DnaA family. Oligomerizes as a right-handed, spiral filament on DNA at oriC.

The protein resides in the cytoplasm. Its function is as follows. Plays an essential role in the initiation and regulation of chromosomal replication. ATP-DnaA binds to the origin of replication (oriC) to initiate formation of the DNA replication initiation complex once per cell cycle. Binds the DnaA box (a 9 base pair repeat at the origin) and separates the double-stranded (ds)DNA. Forms a right-handed helical filament on oriC DNA; dsDNA binds to the exterior of the filament while single-stranded (ss)DNA is stabiized in the filament's interior. The ATP-DnaA-oriC complex binds and stabilizes one strand of the AT-rich DNA unwinding element (DUE), permitting loading of DNA polymerase. After initiation quickly degrades to an ADP-DnaA complex that is not apt for DNA replication. Binds acidic phospholipids. This Buchnera aphidicola subsp. Cinara cedri (strain Cc) protein is Chromosomal replication initiator protein DnaA.